Here is a 913-residue protein sequence, read N- to C-terminus: Cadherin-4 (913 aa).

The signal sequence occupies residues 1-19; sequence MRTGSRLLLVLLVWGSAAA. Residues 20-166 constitute a propeptide that is removed on maturation; the sequence is LNGDLTVRPT…SAKGLRRQKR (147 aa). Cadherin domains follow at residues 167 to 274, 275 to 389, 390 to 504, 505 to 610, and 611 to 721; these read DWVI…RPEF, INQV…PPEF, TTST…APYF, PTNH…DNAP, and ELLP…TIGA. Residues 167 to 731 lie on the Extracellular side of the membrane; the sequence is DWVIPPINVP…VAAAGLGTGA (565 aa). N-linked (GlcNAc...) asparagine glycans are attached at residues N280, N409, N554, N629, N658, and N699. The helical transmembrane segment at 732 to 753 threads the bilayer; that stretch reads IIAILICIIILLTMVLLFVVWM. Over 754–913 the chain is Cytoplasmic; the sequence is KRREKERHTK…ADMYGGGEED (160 aa).

Embryonic brain and neuronal retina.

Its subcellular location is the cell membrane. Functionally, cadherins are calcium-dependent cell adhesion proteins. They preferentially interact with themselves in a homophilic manner in connecting cells; cadherins may thus contribute to the sorting of heterogeneous cell types. May play an important role in retinal development. The polypeptide is Cadherin-4 (CDH4) (Gallus gallus (Chicken)).